Here is an 851-residue protein sequence, read N- to C-terminus: Phosphatidate phosphatase LPIN3 (851 aa).

The N-LIP stretch occupies residues 1-108 (MNYVGQLAET…VPPGLCTSPI (108 aa)). Disordered regions lie at residues 114–385 (SGFP…YLDD) and 400–432 (QSDS…EPTL). Positions 140–151 (GRRKRRRRRKPK) are enriched in basic residues. A Nuclear localization signal motif is present at residues 141 to 148 (RRKRRRRR). The residue at position 159 (Thr-159) is a Phosphothreonine. Phosphoserine is present on residues Ser-161, Ser-162, and Ser-224. Over residues 268–286 (GRAGATSPPRGGPSTPSTS) the composition is skewed to low complexity. Over residues 418–429 (SLRDPNPEHEPE) the composition is skewed to basic and acidic residues. A Phosphoserine modification is found at Ser-463. Residues 542-559 (SAQKEKTAAKEQQGEKTE) show a composition bias toward basic and acidic residues. The tract at residues 542 to 591 (SAQKEKTAAKEQQGEKTEVLSSDDDAPDSPVILEIPSLPPSTPPSTPTYK) is disordered. The segment covering 578–587 (SLPPSTPPST) has biased composition (pro residues). Positions 590 to 792 (YKKSLRLSSD…RIFTVNPRGE (203 aa)) are C-LIP. A DXDXT motif motif is present at residues 644 to 648 (DIDGT). Positions 655–659 (LGHIL) match the LXXIL motif motif.

It belongs to the lipin family. Requires Mg(2+) as cofactor. As to expression, significant expression in intestine and other regions of the gastrointestinal tract.

It is found in the nucleus. It catalyses the reaction a 1,2-diacyl-sn-glycero-3-phosphate + H2O = a 1,2-diacyl-sn-glycerol + phosphate. Inhibited by N-ethylmaleimide. In terms of biological role, magnesium-dependent phosphatidate phosphatase enzyme which catalyzes the conversion of phosphatidic acid to diacylglycerol during triglyceride, phosphatidylcholine and phosphatidylethanolamine biosynthesis therefore regulates fatty acid metabolism. This is Phosphatidate phosphatase LPIN3 from Homo sapiens (Human).